Consider the following 337-residue polypeptide: MVREEIAESTRTLQWKCVESRVDSKRLYYGRFILSPLMKGQADTIGISMRRALLGEIEGTCITRAKSEKVPHEYSTVVGIEESVHEILFNLKEIVLRSNLYEIRDASICVRGPRYVTAQDIISPPYVEIVDTTQYIANLTEPIDLCIELEIKRDRGYRMKPITNSQDGSYPIDAVFMPVRNANHSIHSYGNGNEKQEILFLEIWTNGSLTPKEALYEASRNLIDLFVPFLHAEEEDINFEENKNKFTLPPLTFQDRLSNLKKNKKGIPLKYIFIDQLELPSRTYNCLKRSNIHTLLDLLSKGQENLIKMEYFHIEDVKQILDTLQKHFAVDLPKVLI.

The alpha N-terminal domain (alpha-NTD) stretch occupies residues 1–233 (MVREEIAEST…DLFVPFLHAE (233 aa)). Residues 266 to 337 (GIPLKYIFID…FAVDLPKVLI (72 aa)) form an alpha C-terminal domain (alpha-CTD) region.

It belongs to the RNA polymerase alpha chain family. As to quaternary structure, in plastids the minimal PEP RNA polymerase catalytic core is composed of four subunits: alpha, beta, beta', and beta''. When a (nuclear-encoded) sigma factor is associated with the core the holoenzyme is formed, which can initiate transcription.

It localises to the plastid. The protein resides in the chloroplast. It catalyses the reaction RNA(n) + a ribonucleoside 5'-triphosphate = RNA(n+1) + diphosphate. Its function is as follows. DNA-dependent RNA polymerase catalyzes the transcription of DNA into RNA using the four ribonucleoside triphosphates as substrates. This is DNA-directed RNA polymerase subunit alpha from Dioscorea elephantipes (Elephant's foot yam).